A 562-amino-acid chain; its full sequence is Protein FAM222B (562 aa).

Composition is skewed to low complexity over residues 147–167 and 183–201; these read PQAQ…LAHA and ALSH…HPQQ. Disordered stretches follow at residues 147-242 and 537-562; these read PQAQ…PPNV and AHRA…PGYR.

Belongs to the FAM222 family.

The protein is Protein FAM222B (Fam222b) of Mus musculus (Mouse).